Reading from the N-terminus, the 277-residue chain is Large ribosomal subunit protein uL2 (277 aa).

Residues 222–265 (GVAMNPIDHPHGGGEGRTSGGRHPVTPWGKPTKGKKTRTNKSTD) are disordered.

This sequence belongs to the universal ribosomal protein uL2 family. As to quaternary structure, part of the 50S ribosomal subunit. Forms a bridge to the 30S subunit in the 70S ribosome.

Its function is as follows. One of the primary rRNA binding proteins. Required for association of the 30S and 50S subunits to form the 70S ribosome, for tRNA binding and peptide bond formation. It has been suggested to have peptidyltransferase activity; this is somewhat controversial. Makes several contacts with the 16S rRNA in the 70S ribosome. The sequence is that of Large ribosomal subunit protein uL2 from Bradyrhizobium sp. (strain BTAi1 / ATCC BAA-1182).